We begin with the raw amino-acid sequence, 192 residues long: Akirin-1 (192 aa).

The segment at 17 to 71 is disordered; the sequence is LLSPGSPKRRRCAPLPGPTPGLRPPDAEPPPPFQTQTPPQSLQQPAPPGSERRLP. Serine 22 is subject to Phosphoserine. Residues 23 to 28 carry the Nuclear localization signal motif; the sequence is PKRRRC. Positions 31 to 49 are enriched in pro residues; sequence LPGPTPGLRPPDAEPPPPF. Residues 50–60 are compositionally biased toward low complexity; it reads QTQTPPQSLQQ. At threonine 72 the chain carries Phosphothreonine. Polar residues predominate over residues 104–122; it reads ASESQPHSSALTAPSSPGS. Positions 104–127 are disordered; sequence ASESQPHSSALTAPSSPGSSWMKK. The SYVS motif motif lies at 189-192; sequence SYVS.

Belongs to the akirin family. Widely expressed with the highest expression in heart, liver, placenta and peripheral blood leukocytes.

It localises to the nucleus. Its function is as follows. Molecular adapter that acts as a bridge between proteins, and which is involved skeletal muscle development. Functions as a signal transducer for MSTN during skeletal muscle regeneration and myogenesis. May regulate chemotaxis of both macrophages and myoblasts by reorganising actin cytoskeleton, leading to more efficient lamellipodia formation via a PI3 kinase dependent pathway. In contrast to AKIRIN2, not involved in nuclear import of proteasomes. The protein is Akirin-1 of Homo sapiens (Human).